A 467-amino-acid chain; its full sequence is Uronate isomerase (467 aa).

It belongs to the metallo-dependent hydrolases superfamily. Uronate isomerase family.

The catalysed reaction is D-glucuronate = D-fructuronate. It catalyses the reaction aldehydo-D-galacturonate = keto-D-tagaturonate. It functions in the pathway carbohydrate metabolism; pentose and glucuronate interconversion. The polypeptide is Uronate isomerase (Histophilus somni (strain 2336) (Haemophilus somnus)).